The primary structure comprises 648 residues: Pumilio homolog 3 (648 aa).

Residues 1–124 (MEVKGKKQFT…KKKKELKQSR (124 aa)) form a disordered region. The span at 17–27 (AQEKNRFHKNS) shows a compositional bias: basic and acidic residues. At K33 the chain carries N6-acetyllysine. Residues 60-69 (LGKKGVKQFK) are compositionally biased toward basic residues. Residues 94-124 (FQPDGRSDESAAKKPKWDDFKKKKKELKQSR) show a composition bias toward basic and acidic residues. A Nuclear localization signal motif is present at residues 106-118 (KKPKWDDFKKKKK). The region spanning 143 to 510 (EILRRKDCDK…VVLDKSACVL (368 aa)) is the PUM-HD domain. Pumilio repeat units follow at residues 177 to 212 (HDST…LSKA), 213 to 248 (KYSR…MLRH), 249 to 277 (AEAS…ELYG), 289 to 325 (RTLD…VIKH), 326 to 361 (SLVH…LAHT), 362 to 397 (HDGA…VANG), 398 to 435 (QYSH…IVND), 436 to 504 (KYGR…VVLD), 505 to 551 (KSAC…IAEH), 552 to 596 (PAGH…WASV), and 597 to 636 (NRGA…KSTS). Residues 289 to 297 (RTLDKVLEV) form an HA-8 region.

As to quaternary structure, interacts with PARP1 (via catalytic domain). In terms of tissue distribution, widely expressed.

The protein localises to the nucleus. It localises to the nucleolus. It is found in the nucleoplasm. Its subcellular location is the chromosome. In terms of biological role, inhibits the poly(ADP-ribosyl)ation activity of PARP1 and the degradation of PARP1 by CASP3 following genotoxic stress. Binds to double-stranded RNA or DNA without sequence specificity. Involved in development of the eye and of primordial germ cells. The chain is Pumilio homolog 3 from Homo sapiens (Human).